Reading from the N-terminus, the 1059-residue chain is Translation initiation factor IF-2 (1059 aa).

2 stretches are compositionally biased toward polar residues: residues 55 to 75 (LPHSPSLSAAPEKSNSQNQDS) and 107 to 126 (KINNNLVTTPPNTSVLNNQV). Disordered stretches follow at residues 55–81 (LPHSPSLSAAPEKSNSQNQDSGIGYNE), 93–394 (PKPL…RLRL), and 418–468 (SLSL…QSAE). Positions 178 to 187 (DSNEKSKVEV) are enriched in basic and acidic residues. A compositionally biased stretch (polar residues) spans 202–211 (LNRNLRNTGV). A compositionally biased stretch (basic residues) spans 216 to 229 (QKNKKPKQEGKKRK). 2 stretches are compositionally biased toward basic and acidic residues: residues 230–252 (DKEEKPFEKPAIVSKKENKDTSI) and 259–273 (SKKENKDTFQNRESV). Polar residues predominate over residues 274–284 (KTSASDTSSQL). Basic and acidic residues-rich tracts occupy residues 291 to 300 (KPTVKLKQEQ) and 359 to 368 (LTKDKKVSKW). Residues 452-463 (SHESVQSESNEQ) are compositionally biased toward low complexity. Residues 556 to 733 (RRPPVVTIMG…EVEDLQANPE (178 aa)) enclose the tr-type G domain. Positions 565–572 (GHVDHGKT) are G1. Residue 565–572 (GHVDHGKT) participates in GTP binding. The G2 stretch occupies residues 590 to 594 (GITQH). Residues 615–618 (DTPG) form a G3 region. GTP-binding positions include 615 to 619 (DTPGH) and 669 to 672 (NKID). Residues 669-672 (NKID) form a G4 region. The G5 stretch occupies residues 705-707 (SAI).

The protein belongs to the TRAFAC class translation factor GTPase superfamily. Classic translation factor GTPase family. IF-2 subfamily.

It localises to the cytoplasm. Its function is as follows. One of the essential components for the initiation of protein synthesis. Protects formylmethionyl-tRNA from spontaneous hydrolysis and promotes its binding to the 30S ribosomal subunits. Also involved in the hydrolysis of GTP during the formation of the 70S ribosomal complex. This chain is Translation initiation factor IF-2, found in Trichodesmium erythraeum (strain IMS101).